Here is a 147-residue protein sequence, read N- to C-terminus: D-aminoacyl-tRNA deacylase (147 aa).

Positions 137 to 138 (GP) match the Gly-cisPro motif, important for rejection of L-amino acids motif.

The protein belongs to the DTD family. In terms of assembly, homodimer.

It is found in the cytoplasm. It carries out the reaction glycyl-tRNA(Ala) + H2O = tRNA(Ala) + glycine + H(+). The catalysed reaction is a D-aminoacyl-tRNA + H2O = a tRNA + a D-alpha-amino acid + H(+). Its function is as follows. An aminoacyl-tRNA editing enzyme that deacylates mischarged D-aminoacyl-tRNAs. Also deacylates mischarged glycyl-tRNA(Ala), protecting cells against glycine mischarging by AlaRS. Acts via tRNA-based rather than protein-based catalysis; rejects L-amino acids rather than detecting D-amino acids in the active site. By recycling D-aminoacyl-tRNA to D-amino acids and free tRNA molecules, this enzyme counteracts the toxicity associated with the formation of D-aminoacyl-tRNA entities in vivo and helps enforce protein L-homochirality. This Acinetobacter baumannii (strain ATCC 17978 / DSM 105126 / CIP 53.77 / LMG 1025 / NCDC KC755 / 5377) protein is D-aminoacyl-tRNA deacylase.